A 589-amino-acid chain; its full sequence is V-type ATP synthase alpha chain 1 (589 aa).

Position 239–246 (239–246 (GPFGAGKT)) interacts with ATP.

The protein belongs to the ATPase alpha/beta chains family.

The enzyme catalyses ATP + H2O + 4 H(+)(in) = ADP + phosphate + 5 H(+)(out). Produces ATP from ADP in the presence of a proton gradient across the membrane. The V-type alpha chain is a catalytic subunit. The polypeptide is V-type ATP synthase alpha chain 1 (atpA1) (Treponema pallidum (strain Nichols)).